The chain runs to 238 residues: Riboflavin-binding protein (238 aa).

The signal sequence occupies residues 1-17 (MLRFAITLFAVITSSTC). A Pyrrolidone carboxylic acid modification is found at glutamine 18. Cystine bridges form between cysteine 22–cysteine 49, cysteine 41–cysteine 90, cysteine 50–cysteine 94, cysteine 74–cysteine 155, cysteine 81–cysteine 127, cysteine 116–cysteine 186, cysteine 120–cysteine 169, cysteine 133–cysteine 151, and cysteine 184–cysteine 219. N-linked (GlcNAc...) asparagine glycosylation is present at asparagine 53. Asparagine 164 is a glycosylation site (N-linked (GlcNAc...) asparagine). Residues serine 204, serine 205, serine 208, serine 209, serine 210, serine 212, serine 213, and serine 214 each carry the phosphoserine modification.

Belongs to the folate receptor family. Post-translationally, plasma and yolk RBPS have the same carbohydrate components, whereas egg-white RBP has a different, ovomucoid-type carbohydrate chain. In terms of processing, plasma RBP has the same C-terminal sequence as the egg-white RBP, which suggests that the C-terminal residues are cleaved off upon incorporation into the oocyte. In terms of tissue distribution, yolk RBP is synthesized in the liver; egg-white RBP is synthesized in the oviduct.

Functionally, required for the transport of riboflavin to the developing oocyte. This Gallus gallus (Chicken) protein is Riboflavin-binding protein.